The following is a 122-amino-acid chain: Large ribosomal subunit protein uL14 (122 aa).

This sequence belongs to the universal ribosomal protein uL14 family. Part of the 50S ribosomal subunit. Forms a cluster with proteins L3 and L19. In the 70S ribosome, L14 and L19 interact and together make contacts with the 16S rRNA in bridges B5 and B8.

In terms of biological role, binds to 23S rRNA. Forms part of two intersubunit bridges in the 70S ribosome. This chain is Large ribosomal subunit protein uL14, found in Herminiimonas arsenicoxydans.